The following is an 892-amino-acid chain: Chromodomain-helicase-DNA-binding protein 3 (892 aa).

Positions 1–20 are enriched in basic and acidic residues; that stretch reads MSSKRGADPDWKTPGKASKD. The disordered stretch occupies residues 1–29; that stretch reads MSSKRGADPDWKTPGKASKDKRPKTNAKK. The PHD-type zinc-finger motif lies at 35 to 82; it reads EEYCKVCSDGGDLLCCDSCPSVYHRTCLSPPLKSIPKGDWICPRCIPL. Chromo domains lie at 84–156 and 179–240; these read GKAE…PSLE and LLVQ…GRQR. Residues 279 to 458 form the Helicase ATP-binding domain; it reads RYSWGQGIPT…FHLLNFLSSG (180 aa). 292–299 provides a ligand contact to ATP; sequence DEMGLGKT. Positions 409–412 match the DEAH box motif; sequence DEAH. The region spanning 590–739 is the Helicase C-terminal domain; that stretch reads LLSKMLKQLK…LTHLVVRPGM (150 aa). Residues 839–892 form a disordered region; sequence SQPKLPKKQKKQSQQSQVDVESIMGKGKRIRKEIDYSNQYPSPNRATPSSIVLM. The segment covering 874 to 892 has biased composition (polar residues); sequence YSNQYPSPNRATPSSIVLM.

Belongs to the SNF2/RAD54 helicase family. In terms of assembly, monomer.

The protein resides in the nucleus. Its subcellular location is the chromosome. It catalyses the reaction ATP + H2O = ADP + phosphate + H(+). Its activity is regulated as follows. ATPase activity is stimulated by binding to DNA or nucleosomes, but is strongly activated by nucleosomes. In terms of biological role, ATP-dependent chromatin-remodeling factor which acts in nucleosome-remodeling by catalyzing ATP-dependent nucleosome mobilization. Likely to be involved in the regulation of transcription. This is Chromodomain-helicase-DNA-binding protein 3 from Drosophila melanogaster (Fruit fly).